A 317-amino-acid chain; its full sequence is Beta-ketoacyl-[acyl-carrier-protein] synthase III (317 aa).

Active-site residues include cysteine 112 and histidine 244. Residues 245–249 are ACP-binding; it reads QANLR. Asparagine 274 is an active-site residue.

Belongs to the thiolase-like superfamily. FabH family. In terms of assembly, homodimer.

It localises to the cytoplasm. It carries out the reaction malonyl-[ACP] + acetyl-CoA + H(+) = 3-oxobutanoyl-[ACP] + CO2 + CoA. Its pathway is lipid metabolism; fatty acid biosynthesis. Catalyzes the condensation reaction of fatty acid synthesis by the addition to an acyl acceptor of two carbons from malonyl-ACP. Catalyzes the first condensation reaction which initiates fatty acid synthesis and may therefore play a role in governing the total rate of fatty acid production. Possesses both acetoacetyl-ACP synthase and acetyl transacylase activities. Its substrate specificity determines the biosynthesis of branched-chain and/or straight-chain of fatty acids. The chain is Beta-ketoacyl-[acyl-carrier-protein] synthase III from Baumannia cicadellinicola subsp. Homalodisca coagulata.